We begin with the raw amino-acid sequence, 71 residues long: Sec-independent protein translocase protein TatA (71 aa).

The helical transmembrane segment at 1-21 (MGSFSMGHWLIVLAIIVLLFG) threads the bilayer. Residues 41–57 (KEMEDETPVEKIEKADS) are compositionally biased toward basic and acidic residues. Residues 41-71 (KEMEDETPVEKIEKADSETQSTKQNETTKNV) form a disordered region. Polar residues predominate over residues 58–71 (ETQSTKQNETTKNV).

It belongs to the TatA/E family. As to quaternary structure, the Tat system comprises two distinct complexes: a TatABC complex, containing multiple copies of TatA, TatB and TatC subunits, and a separate TatA complex, containing only TatA subunits. Substrates initially bind to the TatABC complex, which probably triggers association of the separate TatA complex to form the active translocon.

The protein resides in the cell inner membrane. Its function is as follows. Part of the twin-arginine translocation (Tat) system that transports large folded proteins containing a characteristic twin-arginine motif in their signal peptide across membranes. TatA could form the protein-conducting channel of the Tat system. The protein is Sec-independent protein translocase protein TatA of Campylobacter fetus subsp. fetus (strain 82-40).